Here is a 153-residue protein sequence, read N- to C-terminus: NADPH-dependent 7-cyano-7-deazaguanine reductase (153 aa).

Residue Cys-51 is the Thioimide intermediate of the active site. Asp-58 acts as the Proton donor in catalysis. Residues 73–75 (LES) and 92–93 (HE) contribute to the substrate site.

The protein belongs to the GTP cyclohydrolase I family. QueF type 1 subfamily.

Its subcellular location is the cytoplasm. The catalysed reaction is 7-aminomethyl-7-carbaguanine + 2 NADP(+) = 7-cyano-7-deazaguanine + 2 NADPH + 3 H(+). It functions in the pathway tRNA modification; tRNA-queuosine biosynthesis. In terms of biological role, catalyzes the NADPH-dependent reduction of 7-cyano-7-deazaguanine (preQ0) to 7-aminomethyl-7-deazaguanine (preQ1). This chain is NADPH-dependent 7-cyano-7-deazaguanine reductase, found in Bradyrhizobium diazoefficiens (strain JCM 10833 / BCRC 13528 / IAM 13628 / NBRC 14792 / USDA 110).